The primary structure comprises 382 residues: Tuliposide A-converting enzyme 2, chloroplastic (382 aa).

A chloroplast-targeting transit peptide spans 1 to 74; it reads MSVASFFSSL…PSPSLSPTPT (74 aa). The active-site Acyl-ester intermediate is S232. Residues D324 and H356 each act as charge relay system in the active site.

Belongs to the AB hydrolase superfamily. As to quaternary structure, homodimer. In terms of tissue distribution, expressed in roots, stems, leaves, petals, stamens and pistils, but not in bulb scales.

It localises to the plastid. The protein resides in the chloroplast. The catalysed reaction is 6-tuliposide A = tulipalin A + D-glucose. With respect to regulation, inhibited by NaF, AgNO(3), HgCl(2), CuSO(4) and phenylmethylsulfonyl fluoride (PMSF). Lactone-forming carboxylesterases, specifically catalyzing intramolecular transesterification, but not hydrolysis. Involved in the biosynthesis of tulipalins, defensive chemicals that show antimicrobial activities against a broad range of strains of bacteria and fungi. Substrates are 6-tuliposide A &gt; 6-tuliposide B. In Tulipa gesneriana (Garden tulip), this protein is Tuliposide A-converting enzyme 2, chloroplastic (TCEA2).